A 483-amino-acid polypeptide reads, in one-letter code: tRNA sulfurtransferase (483 aa).

One can recognise a THUMP domain in the interval 62–166 (PEICDALTRI…QDKLILVKAR (105 aa)). ATP contacts are provided by residues 184 to 185 (LI), lysine 266, glycine 288, and glutamine 297. Cysteines 345 and 457 form a disulfide. In terms of domain architecture, Rhodanese spans 405–483 (LADTDVLLDI…GYTNVKVYRP (79 aa)). Cysteine 457 functions as the Cysteine persulfide intermediate in the catalytic mechanism.

This sequence belongs to the ThiI family.

It localises to the cytoplasm. It carries out the reaction [ThiI sulfur-carrier protein]-S-sulfanyl-L-cysteine + a uridine in tRNA + 2 reduced [2Fe-2S]-[ferredoxin] + ATP + H(+) = [ThiI sulfur-carrier protein]-L-cysteine + a 4-thiouridine in tRNA + 2 oxidized [2Fe-2S]-[ferredoxin] + AMP + diphosphate. The enzyme catalyses [ThiS sulfur-carrier protein]-C-terminal Gly-Gly-AMP + S-sulfanyl-L-cysteinyl-[cysteine desulfurase] + AH2 = [ThiS sulfur-carrier protein]-C-terminal-Gly-aminoethanethioate + L-cysteinyl-[cysteine desulfurase] + A + AMP + 2 H(+). The protein operates within cofactor biosynthesis; thiamine diphosphate biosynthesis. Its function is as follows. Catalyzes the ATP-dependent transfer of a sulfur to tRNA to produce 4-thiouridine in position 8 of tRNAs, which functions as a near-UV photosensor. Also catalyzes the transfer of sulfur to the sulfur carrier protein ThiS, forming ThiS-thiocarboxylate. This is a step in the synthesis of thiazole, in the thiamine biosynthesis pathway. The sulfur is donated as persulfide by IscS. This is tRNA sulfurtransferase from Yersinia pseudotuberculosis serotype O:1b (strain IP 31758).